The following is a 230-amino-acid chain: PKHD-type hydroxylase Xfasm12_1709 (230 aa).

Positions 78-182 (RTLPPRFNRY…RIASFFWVQS (105 aa)) constitute a Fe2OG dioxygenase domain. Fe cation contacts are provided by His96, Asp98, and His163. Arg173 serves as a coordination point for 2-oxoglutarate.

Requires Fe(2+) as cofactor. L-ascorbate serves as cofactor.

This Xylella fastidiosa (strain M12) protein is PKHD-type hydroxylase Xfasm12_1709.